Here is a 791-residue protein sequence, read N- to C-terminus: Phenylalanine--tRNA ligase beta subunit (791 aa).

The tRNA-binding domain occupies 39–148; sequence AADFSGVVVA…ADAPVGADIR (110 aa). One can recognise a B5 domain in the interval 401 to 476; that stretch reads PLRAPVRLRE…RVYGYDAIPR (76 aa). Residues aspartate 454, aspartate 460, glutamate 463, and glutamate 464 each coordinate Mg(2+). In terms of domain architecture, FDX-ACB spans 697–790; it reads SRFPLVRRDL…LAADFGAKLR (94 aa).

It belongs to the phenylalanyl-tRNA synthetase beta subunit family. Type 1 subfamily. Tetramer of two alpha and two beta subunits. It depends on Mg(2+) as a cofactor.

The protein resides in the cytoplasm. The enzyme catalyses tRNA(Phe) + L-phenylalanine + ATP = L-phenylalanyl-tRNA(Phe) + AMP + diphosphate + H(+). The protein is Phenylalanine--tRNA ligase beta subunit of Methylococcus capsulatus (strain ATCC 33009 / NCIMB 11132 / Bath).